The sequence spans 332 residues: Nicotianamine synthase 1 (332 aa).

Belongs to the nicotianamine synthase (NAS)-like family. Expressed in roots.

It catalyses the reaction 3 S-adenosyl-L-methionine = nicotianamine + 3 S-methyl-5'-thioadenosine + 3 H(+). In terms of biological role, synthesizes nicotianamine, a polyamine that is the first intermediate in the synthesis of the phytosiderophores of the mugineic acid type found in gramineae which serve as a sensor for the physiological iron status within the plant, and/or might be involved in the transport of iron. The protein is Nicotianamine synthase 1 (NAS1) of Oryza sativa subsp. indica (Rice).